The chain runs to 465 residues: Presenilin spe-4 (465 aa).

Topologically, residues 1–18 (MDTLRSISSELVRSSQLR) are cytoplasmic. A helical transmembrane segment spans residues 19–39 (WTLFSVIANMSLTLSIWIGVY). At 40–71 (NMEVNSELSKTYFLDPSFEQTTGNLLLDGFIN) the chain is on the lumenal side. A helical transmembrane segment spans residues 72-92 (GVGTILVLGCVSFIMLAFVLF). At 93–96 (DFRR) the chain is on the cytoplasmic side. Residues 97–117 (IVKAWLTLSCLLILFGVSAQT) form a helical membrane-spanning segment. The Lumenal portion of the chain corresponds to 118–136 (LHDMFSQVFDQDDNNQYYM). The chain crosses the membrane as a helical span at residues 137 to 157 (TIVLIVVPTVVYGFGGIYAFF). Topologically, residues 158–160 (SNS) are cytoplasmic. The helical transmembrane segment at 161–181 (SLILHQIFVVTNCSLISVFYL) threads the bilayer. The Lumenal segment spans residues 182–190 (RVFPSKTTW). The helical transmembrane segment at 191-211 (FVLWIVLFWDLFAVLAPMGPL) threads the bilayer. D200 is a catalytic residue. At 212 to 389 (KKVQEKASDY…DALNDGEVLR (178 aa)) the chain is on the cytoplasmic side. A disordered region spans residues 287-356 (INPDSVPTEH…SDISTAEECD (70 aa)). Residues 326–350 (SETSSGSSNLSSSDSSTTVSTSDIS) are compositionally biased toward low complexity. The helical transmembrane segment at 390-410 (LGFGDFVFYSLLIGQAAASGC) threads the bilayer. D394 is an active-site residue. Position 411 (P411) is a topological domain, lumenal. A helical transmembrane segment spans residues 412-432 (FAVISAALGILFGLVVTLTVF). Topologically, residues 433-439 (STEESTT) are cytoplasmic. Residues 440 to 442 (PAL) carry the PAL motif. The helical intramembrane region spans 440 to 460 (PALPLPVICGTFCYFSSMFFW). At 461-465 (EQLYG) the chain is on the cytoplasmic side.

It belongs to the peptidase A22A family. In terms of assembly, homodimer. Potential component of the gamma-secretase complex, a complex probably composed of the presenilin homodimer (sel-12, hop-1 or spe-4), nicastrin (aph-2), aph-1 and pen-2.

The protein localises to the endoplasmic reticulum membrane. Its subcellular location is the golgi apparatus. The protein resides in the cis-Golgi network membrane. Its function is as follows. Potential catalytic subunit of the gamma-secretase complex during spermatogenesis, an endoprotease complex that catalyzes the intramembrane cleavage of integral membrane proteins such as Notch receptors (lin-12 or glp-1). Involved in spermatid formation during meiosis II. May be required for proper localization of macromolecules that are subject to asymmetric partitioning during spermatogenesis. The polypeptide is Presenilin spe-4 (Caenorhabditis elegans).